A 414-amino-acid polypeptide reads, in one-letter code: Transcriptional repressor protein YY1 (414 aa).

The interaction with the SMAD1/SMAD4 complex stretch occupies residues 1–170 (MASGDTLYIA…GGGSSSSGGG (170 aa)). A disordered region spans residues 33 to 81 (VETIETTVVGEEEEEDDDDEDGGGGDHGGGGGHGHAGHHHHHHHHHHHP). The segment covering 42–55 (GEEEEEDDDDEDGG) has biased composition (acidic residues). Positions 57-66 (GDHGGGGGHG) are enriched in gly residues. Basic residues predominate over residues 67 to 81 (HAGHHHHHHHHHHHP). Residues 116–260 (DDSDGLRAED…YSEYMTGKKL (145 aa)) are gly-rich region involved in interaction with HCFC1. S118 is subject to Phosphoserine; by CK2. The interval 157-203 (GKSGGGGSSSSGGGRVKKGGGKKSGKKSYLSGGAGAAGGGGADPGNK) is disordered. The span at 158 to 170 (KSGGGGSSSSGGG) shows a compositional bias: gly residues. The segment covering 171 to 182 (RVKKGGGKKSGK) has biased composition (basic residues). Residues K182 and K183 each participate in a glycyl lysine isopeptide (Lys-Gly) (interchain with G-Cter in SUMO2) cross-link. Position 187 is a phosphoserine (S187). Over residues 188–199 (GGAGAAGGGGAD) the composition is skewed to gly residues. Residues K208 and K230 each participate in a glycyl lysine isopeptide (Lys-Gly) (interchain with G-Cter in SUMO2) cross-link. S247 carries the phosphoserine modification. The interval 257 to 341 (GKKLPPGGIP…KAFVESSKLK (85 aa)) is involved in nuclear matrix association. Glycyl lysine isopeptide (Lys-Gly) (interchain with G-Cter in SUMO2) cross-links involve residues K286 and K288. A binding to DNA region spans residues 295 to 414 (TIACPHKGCT…LTHAKAKNNQ (120 aa)). 3 C2H2-type zinc fingers span residues 296–320 (IACPHKGCTKMFRDNSAMRKHLHTH), 325–347 (HVCAECGKAFVESSKLKRHQLVH), and 353–377 (FQCTFEGCGKRFSLDFNLRTHVRIH). Zn(2+) is bound by residues C298, C303, H316, H320, C327, C330, H343, H347, C355, C360, H373, and H377. Residues 333–371 (AFVESSKLKRHQLVHTGEKPFQCTFEGCGKRFSLDFNLR) are involved in repression of activated transcription. Residues 371 to 397 (RTHVRIHTGDRPYVCPFDGCNKKFAQS) are involved in masking transactivation domain. T378 carries the phosphothreonine modification. Residues 383 to 407 (YVCPFDGCNKKFAQSTNLKSHILTH) form a C2H2-type 4 zinc finger. Zn(2+) contacts are provided by C385, C390, H403, and H407. Residues K409 and K411 each participate in a glycyl lysine isopeptide (Lys-Gly) (interchain with G-Cter in SUMO2) cross-link.

This sequence belongs to the YY transcription factor family. Interacts with YAF2 through the region encompassing the first and second zinc fingers. Component of the chromatin remodeling INO80 complex; specifically part of a complex module associated with the DBINO domain of INO80. Interacts with EED and EZH2; the interactions are indicative for an association with the PRC2/EED-EZH2 complex. Interacts with SFMBT2. Found in a complex with SMAD1 and SMAD4. Found in a complex with YY1, SIN3A and HDAC1. Accessory component of the polycomb repressive deubiquitinase (PR-DUB) complex, at least composed of BAP1, one of ASXL1, ASXL2 or (probably) ASXL3 and one of MBD5 or MBD6; the PR-DUB core associates with a number of accessory proteins, including FOXK1, FOXK2, KDM1B, HCFC1, YY1 and OGT. Interacts (via Gly-rich region) with HCFC1; the interaction is direct. Interacts (via C-terminal zinc-finger domains) with BAP1 (via ULD domain); the interaction is direct and requires HCFC1. Phosphorylation at Ser-118 by CK2 prevents proteolytic cleavage by caspase-7 (CASP7) during apoptosis. Post-translationally, proteolytically cleaved by caspase-7 (CASP7) in response to apoptosis. Phosphorylation at Ser-118 protects against proteolytic cleavage. In terms of processing, transiently poly-ADP-ribosylated by PARP1 upon DNA damage, with the effect of decreasing affinity of YY1 to its cognate DNA binding sites. Ubiquitinated.

It localises to the nucleus matrix. Its function is as follows. Multifunctional transcription factor that exhibits positive and negative control on a large number of cellular and viral genes by binding to sites overlapping the transcription start site. Binds to the consensus sequence 5'-CCGCCATNTT-3'; some genes have been shown to contain a longer binding motif allowing enhanced binding; the initial CG dinucleotide can be methylated greatly reducing the binding affinity. The effect on transcription regulation is depending upon the context in which it binds and diverse mechanisms of action include direct activation or repression, indirect activation or repression via cofactor recruitment, or activation or repression by disruption of binding sites or conformational DNA changes. Its activity is regulated by transcription factors and cytoplasmic proteins that have been shown to abrogate or completely inhibit YY1-mediated activation or repression. For example, it acts as a repressor in absence of adenovirus E1A protein but as an activator in its presence. Acts synergistically with the SMAD1 and SMAD4 in bone morphogenetic protein (BMP)-mediated cardiac-specific gene expression. Binds to SMAD binding elements (SBEs) (5'-GTCT/AGAC-3') within BMP response element (BMPRE) of cardiac activating regions. May play an important role in development and differentiation. Proposed to recruit the PRC2/EED-EZH2 complex to target genes that are transcriptional repressed. Involved in DNA repair. In vitro, binds to DNA recombination intermediate structures (Holliday junctions). Plays a role in regulating enhancer activation. Recruits the PR-DUB complex to specific gene-regulatory regions. In terms of biological role, proposed core component of the chromatin remodeling INO80 complex which is involved in transcriptional regulation, DNA replication and probably DNA repair; proposed to target the INO80 complex to YY1-responsive elements. This chain is Transcriptional repressor protein YY1 (YY1), found in Homo sapiens (Human).